A 487-amino-acid chain; its full sequence is GTPase Der (487 aa).

EngA-type G domains lie at 3 to 166 and 193 to 366; these read PVIA…PRDA and IKIA…QSAV. GTP contacts are provided by residues 9 to 16, 56 to 60, 118 to 121, 199 to 206, 246 to 250, and 311 to 314; these read GRPNVGKS, DTGGI, NKID, DTAGV, and NKWD. One can recognise a KH-like domain in the interval 367–451; it reads TRWPTSRLTQ…PIRIEYKGGE (85 aa). Residues 448–461 show a composition bias toward basic and acidic residues; it reads KGGENPYEGKKNTL. The segment at 448-487 is disordered; the sequence is KGGENPYEGKKNTLTDRQVNKKRRLMSHHKKAEKKRRDKR. Over residues 467 to 487 the composition is skewed to basic residues; the sequence is NKKRRLMSHHKKAEKKRRDKR.

This sequence belongs to the TRAFAC class TrmE-Era-EngA-EngB-Septin-like GTPase superfamily. EngA (Der) GTPase family. Associates with the 50S ribosomal subunit.

GTPase that plays an essential role in the late steps of ribosome biogenesis. This is GTPase Der from Pseudomonas putida (strain ATCC 700007 / DSM 6899 / JCM 31910 / BCRC 17059 / LMG 24140 / F1).